A 109-amino-acid chain; its full sequence is uncharacterized protein (109 aa).

The segment at 1–26 is disordered; it reads MTPRSLPRYGNSSRRKSFPMHRPSNV.

This is an uncharacterized protein from Mycobacterium bovis (strain ATCC BAA-935 / AF2122/97).